A 353-amino-acid polypeptide reads, in one-letter code: Alanine racemase (353 aa).

Lys-34 functions as the Proton acceptor; specific for D-alanine in the catalytic mechanism. Position 34 is an N6-(pyridoxal phosphate)lysine (Lys-34). Arg-128 contacts substrate. Tyr-251 serves as the catalytic Proton acceptor; specific for L-alanine. Met-299 is a substrate binding site.

This sequence belongs to the alanine racemase family. It depends on pyridoxal 5'-phosphate as a cofactor.

It carries out the reaction L-alanine = D-alanine. It functions in the pathway amino-acid biosynthesis; D-alanine biosynthesis; D-alanine from L-alanine: step 1/1. Catalyzes the interconversion of L-alanine and D-alanine. May also act on other amino acids. The polypeptide is Alanine racemase (alr) (Alcanivorax borkumensis (strain ATCC 700651 / DSM 11573 / NCIMB 13689 / SK2)).